A 471-amino-acid chain; its full sequence is Cysteine--tRNA ligase (471 aa).

Position 29 (Cys-29) interacts with Zn(2+). Positions 31–41 (PTVYNYIHIGN) match the 'HIGH' region motif. Zn(2+) contacts are provided by Cys-209, His-234, and Glu-238. The short motif at 266–270 (KMSKS) is the 'KMSKS' region element. Lys-269 is a binding site for ATP.

It belongs to the class-I aminoacyl-tRNA synthetase family. In terms of assembly, monomer. Requires Zn(2+) as cofactor.

It is found in the cytoplasm. It carries out the reaction tRNA(Cys) + L-cysteine + ATP = L-cysteinyl-tRNA(Cys) + AMP + diphosphate. This chain is Cysteine--tRNA ligase, found in Listeria monocytogenes serovar 1/2a (strain ATCC BAA-679 / EGD-e).